The sequence spans 468 residues: Methylenetetrahydrofolate--tRNA-(uracil-5-)-methyltransferase TrmFO (468 aa).

Position 13–18 (Gly-13–Gly-18) interacts with FAD.

Belongs to the MnmG family. TrmFO subfamily. It depends on FAD as a cofactor.

The protein resides in the cytoplasm. The enzyme catalyses uridine(54) in tRNA + (6R)-5,10-methylene-5,6,7,8-tetrahydrofolate + NADH + H(+) = 5-methyluridine(54) in tRNA + (6S)-5,6,7,8-tetrahydrofolate + NAD(+). It carries out the reaction uridine(54) in tRNA + (6R)-5,10-methylene-5,6,7,8-tetrahydrofolate + NADPH + H(+) = 5-methyluridine(54) in tRNA + (6S)-5,6,7,8-tetrahydrofolate + NADP(+). In terms of biological role, catalyzes the folate-dependent formation of 5-methyl-uridine at position 54 (M-5-U54) in all tRNAs. This is Methylenetetrahydrofolate--tRNA-(uracil-5-)-methyltransferase TrmFO from Bartonella henselae (strain ATCC 49882 / DSM 28221 / CCUG 30454 / Houston 1) (Rochalimaea henselae).